The following is a 378-amino-acid chain: Erythronate-4-phosphate dehydrogenase (378 aa).

Substrate-binding residues include S45 and T66. 2 residues coordinate NAD(+): D146 and T175. R208 is an active-site residue. Residue D232 coordinates NAD(+). E237 is a catalytic residue. H254 serves as the catalytic Proton donor. G257 contributes to the NAD(+) binding site. Y258 serves as a coordination point for substrate.

Belongs to the D-isomer specific 2-hydroxyacid dehydrogenase family. PdxB subfamily. Homodimer.

It is found in the cytoplasm. The enzyme catalyses 4-phospho-D-erythronate + NAD(+) = (R)-3-hydroxy-2-oxo-4-phosphooxybutanoate + NADH + H(+). It participates in cofactor biosynthesis; pyridoxine 5'-phosphate biosynthesis; pyridoxine 5'-phosphate from D-erythrose 4-phosphate: step 2/5. In terms of biological role, catalyzes the oxidation of erythronate-4-phosphate to 3-hydroxy-2-oxo-4-phosphonooxybutanoate. The polypeptide is Erythronate-4-phosphate dehydrogenase (Escherichia coli O6:H1 (strain CFT073 / ATCC 700928 / UPEC)).